Reading from the N-terminus, the 175-residue chain is Crossover junction endodeoxyribonuclease RuvC (175 aa).

Residues D16, E76, and D148 contribute to the active site. Residues D16, E76, and D148 each coordinate Mg(2+).

This sequence belongs to the RuvC family. As to quaternary structure, homodimer which binds Holliday junction (HJ) DNA. The HJ becomes 2-fold symmetrical on binding to RuvC with unstacked arms; it has a different conformation from HJ DNA in complex with RuvA. In the full resolvosome a probable DNA-RuvA(4)-RuvB(12)-RuvC(2) complex forms which resolves the HJ. Mg(2+) is required as a cofactor.

Its subcellular location is the cytoplasm. The catalysed reaction is Endonucleolytic cleavage at a junction such as a reciprocal single-stranded crossover between two homologous DNA duplexes (Holliday junction).. In terms of biological role, the RuvA-RuvB-RuvC complex processes Holliday junction (HJ) DNA during genetic recombination and DNA repair. Endonuclease that resolves HJ intermediates. Cleaves cruciform DNA by making single-stranded nicks across the HJ at symmetrical positions within the homologous arms, yielding a 5'-phosphate and a 3'-hydroxyl group; requires a central core of homology in the junction. The consensus cleavage sequence is 5'-(A/T)TT(C/G)-3'. Cleavage occurs on the 3'-side of the TT dinucleotide at the point of strand exchange. HJ branch migration catalyzed by RuvA-RuvB allows RuvC to scan DNA until it finds its consensus sequence, where it cleaves and resolves the cruciform DNA. The chain is Crossover junction endodeoxyribonuclease RuvC from Bradyrhizobium sp. (strain BTAi1 / ATCC BAA-1182).